We begin with the raw amino-acid sequence, 819 residues long: MEAEEADVDVEGDVAAAAQPGNDESTASVFQDHYLDSTWRRENGCLPWTLDSTISDENRAIIEKMLLEEEYYLSNKSLPGKFWVNQKEDNKKYTNSLQKSSKAMVDSPAKPASHSVKWTVEEKELFEQGLAKFGRRWTKIATLLKSRTVLQVKSYARQYFKNKVKWDVEKETPTQKSSSDLQVKNKDDRTKAWAAACLRGSADPCLNAVKIEKLSDDEDVDITDELDELTSQTSQNSGSHLTLDVPNSKMYTTNQGELCQEGPLAKSSGESLQNVKQGEGEACSSSEIASWAEKQKSTDKNSAELNEKYNKVVEEHTLHRGEVREEAKHSPSPEPCERQDSSGNEMLLPPCQIEEENHEGEELKPPEQEVEIDRNVIQEEEKQAIPEFFEGRQTKTPERYLKIRNYILDQWEICKPKYLNKTSVRPGLKNCGDVNCIGRIHTYLELIGAINFGCEQAVYNRPQPLDKVRAADRKDAEAAYQLAWRLQSMRTRRRRVRDPWGNWCDAKDLEGQTFEHLSVEEMARRKEEEKCKPIKFSKASKLPKSSLDPFQLIPCNFFSEEKQEPFQVKVAAEALLIMNLHAHVSMAEVIGLLGGRYSEADKVLEVCAAEPCNSLSTGLQCEMDPVSQTQASETLALRGYSVIGWYHSHPAFDPNPSLRDIDTQAKYQSYFSRGGAKFIGMIVSPYNRSNPLPYSQITCLVISEEVSPDGTYRLPYKFEVQQMLEEPQWELVFEKTRWIIEKYRLSNSSVPMDRIFRRDSDLTCLQKLLECLRKTLSKVANCFIAEEFLTQIENLFLSNYKSKEENGLAEEDSTKELFM.

The segment covering 1–12 (MEAEEADVDVEG) has biased composition (acidic residues). Residues 1–29 (MEAEEADVDVEGDVAAAAQPGNDESTASV) form a disordered region. Serine 107 bears the Phosphoserine mark. Residues 113 to 164 (SHSVKWTVEEKELFEQGLAKFGRRWTKIATLLKSRTVLQVKSYARQYFKNKV) enclose the SANT domain. Lysine 184 participates in a covalent cross-link: Glycyl lysine isopeptide (Lys-Gly) (interchain with G-Cter in SUMO2). Serine 215 is subject to Phosphoserine. Disordered regions lie at residues 228–247 (ELTS…DVPN), 260–279 (QEGP…KQGE), and 318–347 (LHRG…NEML). Over residues 230-240 (TSQTSQNSGSH) the composition is skewed to polar residues. Threonine 233 carries the post-translational modification Phosphothreonine. The span at 318–340 (LHRGEVREEAKHSPSPEPCERQD) shows a compositional bias: basic and acidic residues. Serine 332 carries the post-translational modification Phosphoserine. Residues 363–461 (LKPPEQEVEI…FGCEQAVYNR (99 aa)) form the SWIRM domain. Positions 568-700 (VKVAAEALLI…PLPYSQITCL (133 aa)) constitute an MPN domain. Zn(2+) is bound by residues histidine 647, histidine 649, and aspartate 660. The JAMM motif signature appears at 647 to 660 (HSHPAFDPNPSLRD). The LXXLL motif motif lies at 765–769 (LQKLL).

It belongs to the peptidase M67A family. MYSM1 subfamily. As to quaternary structure, component of a large chromatin remodeling complex, at least composed of MYSM1, PCAF, RBM10 and KIF11/TRIP5. Binds histones.

The protein localises to the nucleus. It localises to the cytoplasm. Functionally, metalloprotease with deubiquitinase activity that plays important regulator roles in hematopoietic stem cell function, blood cell production and immune response. Participates in the normal programming of B-cell responses to antigen after the maturation process. Within the cytoplasm, plays critical roles in the repression of innate immunity and autoimmunity. Removes 'Lys-63'-linked polyubiquitins from TRAF3 and TRAF6 complexes. Attenuates NOD2-mediated inflammation and tissue injury by promoting 'Lys-63'-linked deubiquitination of RIPK2 component. Suppresses the CGAS-STING1 signaling pathway by cleaving STING1 'Lys-63'-linked ubiquitin chains. In the nucleus, acts as a hematopoietic transcription regulator derepressing a range of genes essential for normal stem cell differentiation including EBF1 and PAX5 in B-cells, ID2 in NK-cell progenitor or FLT3 in dendritic cell precursors. Deubiquitinates monoubiquitinated histone H2A, a specific tag for epigenetic transcriptional repression, leading to dissociation of histone H1 from the nucleosome. The protein is Deubiquitinase MYSM1 (Mysm1) of Mus musculus (Mouse).